The chain runs to 477 residues: MTEQNLHWLSATEMAASVASNNLSPNEIAEAMIQRVDAVNPSINAIVQFDREQVTRDAAELSRQQEAGEKLGPLHGVPFTIKDLTAVDGLPTTFGMKPMADNIATGNAVVVDRLRGAGGLFLGKTNTPESGYYGGTDNHLYGPTHNPWKLGNSAGGSSGGASAAVAAGLGPLAEGSDGAGSVRIPSALCGVVGLKPTTGVIPQTILAGRFYNWAYHGPITRTVADNALMLDIMAGPDNADPLSIERAETSYVEASKGDVKGLRVAWSPNLGLGHVDPEVLAVCLDALAAFEELGAQITEATPQWGNPSESMWSGIWVPGFASEYDLLDWENQRGEVDDYLIEIMHEAERLTGVDVGRADAFRGDMWDTWTTFMNDYDVLVSPTLASATFPLRQFAPSWLEGASLREQLLDWLFTYPYNMLNNPAITVPAGFTADGRPVGLQIAARHRRDALVLRTAANFEAVRPWADKKPADSLVVA.

Active-site charge relay system residues include K82 and S157. S181 (acyl-ester intermediate) is an active-site residue.

Belongs to the amidase family.

It carries out the reaction a monocarboxylic acid amide + H2O = a monocarboxylate + NH4(+). It catalyses the reaction an anilide + H2O = aniline + a carboxylate + H(+). The enzyme catalyses an N-acyl-L-amino acid + H2O = an L-alpha-amino acid + a carboxylate. The catalysed reaction is an N-acetyl-L-cysteine-S-conjugate + H2O = an S-substituted L-cysteine + acetate. Its activity is regulated as follows. Amidase activity is completely suppressed by inhibitors of serine proteases (phenylmethylsulfonyl fluoride and diisopropyl fluorophosphate), partially inhibited by copper and mercury ions, but is not affected by inhibitors of aliphatic amidases (acetaldehyde and nitrophenyl disulfides) or by EDTA. Its function is as follows. Amidase with broad substrate specificity, catalyzing the hydrolysis of a wide range of N-substituted amides, and, to a lesser extent, the hydrolysis of non-substituted amides. Acid para-nitroanilides (4'-nitroacetanilide, Gly-pNA, Ala-pNA, Leu-pNA) are the best substrates for this enzyme. N-substituted acrylamides (isopropyl acrylamide, N,N-dimethyl-aminopropyl acrylamide, and methylene-bis-acrylamide), N-acetyl derivatives of glycine, alanine and leucine, and aliphatic amides (acetamide, acrylamide, isobutyramide, n-butyramide, and valeramide) can also be used as substrates but with less efficiency. This chain is Acylamidase, found in Rhodococcus erythropolis (Arthrobacter picolinophilus).